The sequence spans 128 residues: MEIPEDLRYTREHEWARRKGSAIVVGITDFAQQQLGDVVYVELPDVGDPVKKGESFGVVESTKAVSELFAPISGKVIEVNDPLSDAPETINEDPYEEGWMITIEPSDPKDLEALMDAAAYKAFVEEQE.

In terms of domain architecture, Lipoyl-binding spans 22–104 (AIVVGITDFA…YEEGWMITIE (83 aa)). Position 63 is an N6-lipoyllysine (Lys-63).

This sequence belongs to the GcvH family. In terms of assembly, the glycine cleavage system is composed of four proteins: P, T, L and H. It depends on (R)-lipoate as a cofactor.

Functionally, the glycine cleavage system catalyzes the degradation of glycine. The H protein shuttles the methylamine group of glycine from the P protein to the T protein. In Anaeromyxobacter dehalogenans (strain 2CP-1 / ATCC BAA-258), this protein is Glycine cleavage system H protein.